A 239-amino-acid chain; its full sequence is Ribonuclease PH (239 aa).

Residues Arg-86 and 124–126 contribute to the phosphate site; that span reads GTR.

The protein belongs to the RNase PH family. Homohexameric ring arranged as a trimer of dimers.

The enzyme catalyses tRNA(n+1) + phosphate = tRNA(n) + a ribonucleoside 5'-diphosphate. Functionally, phosphorolytic 3'-5' exoribonuclease that plays an important role in tRNA 3'-end maturation. Removes nucleotide residues following the 3'-CCA terminus of tRNAs; can also add nucleotides to the ends of RNA molecules by using nucleoside diphosphates as substrates, but this may not be physiologically important. Probably plays a role in initiation of 16S rRNA degradation (leading to ribosome degradation) during starvation. This chain is Ribonuclease PH, found in Cupriavidus taiwanensis (strain DSM 17343 / BCRC 17206 / CCUG 44338 / CIP 107171 / LMG 19424 / R1) (Ralstonia taiwanensis (strain LMG 19424)).